Consider the following 149-residue polypeptide: Large ribosomal subunit protein uL13 (149 aa).

The protein belongs to the universal ribosomal protein uL13 family. In terms of assembly, part of the 50S ribosomal subunit.

Functionally, this protein is one of the early assembly proteins of the 50S ribosomal subunit, although it is not seen to bind rRNA by itself. It is important during the early stages of 50S assembly. The polypeptide is Large ribosomal subunit protein uL13 (Chlorobium limicola (strain DSM 245 / NBRC 103803 / 6330)).